Here is a 198-residue protein sequence, read N- to C-terminus: Ribonuclease HII (198 aa).

Positions 11–198 (TCIAGVDEVG…APVKRALGLA (188 aa)) constitute an RNase H type-2 domain. Residues aspartate 17, glutamate 18, and aspartate 109 each coordinate a divalent metal cation.

It belongs to the RNase HII family. It depends on Mn(2+) as a cofactor. Mg(2+) is required as a cofactor.

The protein localises to the cytoplasm. It carries out the reaction Endonucleolytic cleavage to 5'-phosphomonoester.. Its function is as follows. Endonuclease that specifically degrades the RNA of RNA-DNA hybrids. The sequence is that of Ribonuclease HII from Pectobacterium carotovorum subsp. carotovorum (strain PC1).